Reading from the N-terminus, the 931-residue chain is MGKGLEGTAARCGLGMGYLLHSVVLPALAVLGASRPGSAAQDDDFFHELPETFPSDPPEPLPHFLIEPEEAYIVKNKPVNLYCKASPATQIYFKCNSEWVHQKDHVVDERVDETSGLIVCEVSIEISRQQVEELFGPEDYWCQCVAWSSAGTTKSRKAYVRIAYLRKTFEQEPLGKEVSLEQEVLLQCRPPEGIPVAEVEWLKNEEVIDPVEDRNFYITIDHNLIIKQARLSDTANYTCVAKNIVAKRKSTTATVIVYVNGGWSTWTEWSACNSRCGRGFQKRTRTCTNPAPLNGGAFCEGQNVQKIACTTLCPVDGKWTSWSKWSTCGTECTHWRRRECTAPAPKNGGKDCEGLVLQSKNCTDGLCMQAAPDSDDVALYVGIVIAVIVCLAISVVVALFVYRKNHRDFESDIIDSSALNGGFQPVNIKAARQDLLAVPPDLTSAAAMYRGPVYALHDVSDKIPMTNSPILDPLPNLKIKVYNTSGAVTPQDELSDFSSKLSPQITQSLLENETLNVKNQSLARQTDPSCTAFGTFNSLGGHLVIPNSGVSLLIPAGAVPQGRVYEMYVTVHRKEGMRPPVEDSQTLLTPVVSCGPPGALLTRPVVLTMHHCAEPNMDDWQIQLKHQAGQGPWEDVVVVGEENFTTPCYIQLDPEACHILTETLSTYALVGQSITKAAAKRLKLAIFGPLSCSSLEYSIRVYCLDDTQDALKEVLQLERQMGGQLLEEPKTLHFKGSTHNLRLSIHDIAHSLWKSKLPAKYQEIPFYHIWSGCQRNLHCTFTLERFSLNTLELVCKLCVRQVEGEGQIFQLNCSVSEEPTGIDYPIMDSAGSITTIVGPNAFSIPLPIRQKLCSSLDAPQTRGHDWRMLAHKLKLDRYLNYFATKSSPTGVILDLWEAQNFPDGNLSMLAAVLEEMGRHETVVSLAAEGNY.

The signal sequence occupies residues 1-39; that stretch reads MGKGLEGTAARCGLGMGYLLHSVVLPALAVLGASRPGSA. Topologically, residues 40 to 380 are extracellular; the sequence is AQDDDFFHEL…APDSDDVALY (341 aa). An Ig-like domain is found at 62-159; that stretch reads PHFLIEPEEA…AGTTKSRKAY (98 aa). Cystine bridges form between C83/C144, C95/C142, C188/C239, C272/C309, C276/C313, C287/C299, C328/C362, C332/C367, and C340/C352. In terms of domain architecture, Ig-like C2-type spans 161–256; the sequence is RIAYLRKTFE…KRKSTTATVI (96 aa). The N-linked (GlcNAc...) asparagine glycan is linked to N236. TSP type-1 domains follow at residues 260–314 and 316–368; these read NGGW…TLCP and DGKW…GLCM. A glycan (N-linked (GlcNAc...) asparagine) is linked at N361. A helical membrane pass occupies residues 381–401; that stretch reads VGIVIAVIVCLAISVVVALFV. The Cytoplasmic portion of the chain corresponds to 402–931; that stretch reads YRKNHRDFES…VVSLAAEGNY (530 aa). Residues 530–664 form the ZU5 domain; the sequence is CTAFGTFNSL…EACHILTETL (135 aa). Residues 850-929 enclose the Death domain; it reads QKLCSSLDAP…ETVVSLAAEG (80 aa).

It belongs to the unc-5 family. In terms of tissue distribution, restricted to proprioceptive neurons.

It localises to the cell membrane. It is found in the cell surface. Its subcellular location is the synapse. The protein resides in the synaptosome. The protein localises to the cell projection. It localises to the axon. It is found in the dendrite. Its subcellular location is the growth cone. The protein resides in the lamellipodium. The protein localises to the filopodium. In terms of biological role, receptor for netrin required for axon guidance. Mediates axon repulsion of neuronal growth cones in the developing nervous system upon ligand binding. Involved in dorsal root ganglion axon projection towards the spinal cord. The protein is Netrin receptor UNC5C (UNC5C) of Gallus gallus (Chicken).